Consider the following 516-residue polypeptide: Potassium voltage-gated channel subfamily A member 10 (516 aa).

Residues 223 to 244 (VALVSVLVIVISIIIFCMETLP) traverse the membrane as a helical segment. N261 is a glycosylation site (N-linked (GlcNAc...) asparagine). Residues 276–296 (FFVIETACIIWFSFELFVRFI) form a helical membrane-spanning segment. The helical transmembrane segment at 308-328 (IMNIIDIVSIIPYFVTLTTEL) threads the bilayer. Residue N339 is glycosylated (N-linked (GlcNAc...) asparagine). A helical; Voltage-sensor membrane pass occupies residues 344–363 (ILRIIRLVRVFRIFKLSRHS). The chain crosses the membrane as a helical span at residues 380-400 (LGLLIFFLFIGVILFSSAVYF). A Selectivity filter motif is present at residues 426–431 (TVGYGD). Residues 441–461 (IVGTLCAIAGVLTIALPVPVI) traverse the membrane as a helical segment. N503 is a glycosylation site (N-linked (GlcNAc...) asparagine).

It belongs to the potassium channel family. A (Shaker) (TC 1.A.1.2) subfamily. Kv1.8/KCNA10 sub-subfamily. In terms of assembly, homotetramer. As to expression, detected in brain, cochlear sensory epithelium, cochlear ganglion, tegumentum vasculosum. Detected at low levels in cochlear lagena.

It is found in the membrane. It carries out the reaction K(+)(in) = K(+)(out). With respect to regulation, the channel activity is up-regulated by cAMP. In terms of biological role, voltage-gated potassium ion channel that mediates K(+) permeability of excitable membranes. When opened in response to the voltage difference across the membrane, KCNA10 channel selectively allows the flow of potassium ions across the membrane down their electrochemical gradient. The polypeptide is Potassium voltage-gated channel subfamily A member 10 (KCNA10) (Gallus gallus (Chicken)).